A 338-amino-acid chain; its full sequence is Putative pectinesterase 63 (338 aa).

The N-terminal stretch at Met1–Gly24 is a signal peptide. Residues Thr116 and Gln151 each contribute to the substrate site. Residue Asp174 is the Proton donor of the active site. Asp195 serves as the catalytic Nucleophile. Arg252 contacts substrate.

It belongs to the pectinesterase family.

Its subcellular location is the secreted. The protein resides in the cell wall. It carries out the reaction [(1-&gt;4)-alpha-D-galacturonosyl methyl ester](n) + n H2O = [(1-&gt;4)-alpha-D-galacturonosyl](n) + n methanol + n H(+). The protein operates within glycan metabolism; pectin degradation; 2-dehydro-3-deoxy-D-gluconate from pectin: step 1/5. Its function is as follows. Acts in the modification of cell walls via demethylesterification of cell wall pectin. This chain is Putative pectinesterase 63 (PME63), found in Arabidopsis thaliana (Mouse-ear cress).